The primary structure comprises 107 residues: Ribonuclease P protein component 4 (107 aa).

Cys62, Cys65, Cys87, and Cys90 together coordinate Zn(2+).

It belongs to the eukaryotic/archaeal RNase P protein component 4 family. As to quaternary structure, consists of a catalytic RNA component and at least 4-5 protein subunits. Requires Zn(2+) as cofactor.

The protein localises to the cytoplasm. It catalyses the reaction Endonucleolytic cleavage of RNA, removing 5'-extranucleotides from tRNA precursor.. In terms of biological role, part of ribonuclease P, a protein complex that generates mature tRNA molecules by cleaving their 5'-ends. The protein is Ribonuclease P protein component 4 of Archaeoglobus fulgidus (strain ATCC 49558 / DSM 4304 / JCM 9628 / NBRC 100126 / VC-16).